Reading from the N-terminus, the 398-residue chain is Lysophosphatidylserine lipase ABHD12 (398 aa).

Over 1–74 (MRKRTEPVAL…RKGLWLRLRK (74 aa)) the chain is Cytoplasmic. A helical membrane pass occupies residues 75–95 (ILFCVLGLYIAIPFLIKLCPG). Topologically, residues 96 to 398 (IQAKLIFLNF…LGKSEPEHQH (303 aa)) are extracellular. An N-linked (GlcNAc...) asparagine glycan is attached at Asn123. The Nucleophile role is filled by Ser246. Catalysis depends on charge relay system residues Asp333 and His372.

It belongs to the serine esterase family.

The protein localises to the endoplasmic reticulum membrane. It catalyses the reaction 1-(9Z-octadecenoyl)-sn-glycero-3-phospho-L-serine + H2O = sn-glycero-3-phospho-L-serine + (9Z)-octadecenoate + H(+). It carries out the reaction 1-(9Z-octadecenoyl)-sn-glycero-3-phospho-(1'-sn-glycerol) + H2O = sn-glycero-3-phospho-(1'-sn-glycerol) + (9Z)-octadecenoate + H(+). The enzyme catalyses 1-(9Z-octadecenoyl)-sn-glycero-3-phospho-(1D-myo-inositol) + H2O = sn-glycero-3-phospho-1D-myo-inositol + (9Z)-octadecenoate + H(+). The catalysed reaction is 1-(9Z-octadecenoyl)-sn-glycero-3-phosphoethanolamine + H2O = sn-glycero-3-phosphoethanolamine + (9Z)-octadecenoate + H(+). It catalyses the reaction 1-(9Z-octadecenoyl)-sn-glycero-3-phosphocholine + H2O = 1-(9Z-octadecenoyl)-sn-glycerol + phosphocholine + H(+). It carries out the reaction 2-(9Z-octadecenoyl)-glycerol + H2O = glycerol + (9Z)-octadecenoate + H(+). The enzyme catalyses 1-hexadecanoyl-sn-glycero-3-phospho-L-serine + H2O = sn-glycero-3-phospho-L-serine + hexadecanoate + H(+). The catalysed reaction is 2-(5Z,8Z,11Z,14Z-eicosatetraenoyl)-glycerol + H2O = glycerol + (5Z,8Z,11Z,14Z)-eicosatetraenoate + H(+). It catalyses the reaction Hydrolyzes glycerol monoesters of long-chain fatty acids.. It carries out the reaction 1-decanoylglycerol + H2O = decanoate + glycerol + H(+). The enzyme catalyses 1-dodecanoylglycerol + H2O = dodecanoate + glycerol + H(+). The catalysed reaction is 1-tetradecanoylglycerol + H2O = tetradecanoate + glycerol + H(+). It catalyses the reaction 2-hexadecanoylglycerol + H2O = glycerol + hexadecanoate + H(+). It carries out the reaction 1-(9Z-octadecenoyl)-glycerol + H2O = glycerol + (9Z)-octadecenoate + H(+). The enzyme catalyses 2-(9Z,12Z-octadecadienoyl)-glycerol + H2O = (9Z,12Z)-octadecadienoate + glycerol + H(+). The catalysed reaction is 1-(5Z,8Z,11Z,14Z-eicosatetraenoyl)-glycerol + H2O = glycerol + (5Z,8Z,11Z,14Z)-eicosatetraenoate + H(+). It catalyses the reaction 1-(9Z,12Z-octadecadienoyl)-glycerol + H2O = (9Z,12Z)-octadecadienoate + glycerol + H(+). It carries out the reaction 1-hexadecanoylglycerol + H2O = glycerol + hexadecanoate + H(+). The enzyme catalyses 1-octadecanoylglycerol + H2O = octadecanoate + glycerol + H(+). The catalysed reaction is 1-octadecanoyl-2-(9,10-epoxyoctadecanoyl)-sn-glycero-3-phospho-L-serine + H2O = 9,10-epoxyoctadecanoate + 1-octadecanoyl-sn-glycero-3-phosphoserine + H(+). It catalyses the reaction 1-octadecanoyl-2-(10-hydroxyoctadecanoyl)-sn-glycero-3-phospho-L-serine + H2O = 1-octadecanoyl-sn-glycero-3-phosphoserine + 10-hydroxyoctadecanoate + H(+). It carries out the reaction 1-hexadecanoyl-2-(10-hydroxyoctadecanoyl)-sn-glycero-3-phospho-L-serine + H2O = 10-hydroxyoctadecanoate + 1-hexadecanoyl-sn-glycero-3-phospho-L-serine + H(+). Lysophosphatidylserine (LPS) lipase that mediates the hydrolysis of lysophosphatidylserine, a class of signaling lipids that regulates immunological and neurological processes. Represents a major lysophosphatidylserine lipase in the brain, thereby playing a key role in the central nervous system. Also able to hydrolyze oxidized phosphatidylserine; oxidized phosphatidylserine is produced in response to severe inflammatory stress and constitutes a proapoptotic 'eat me' signal. Also has monoacylglycerol (MAG) lipase activity: hydrolyzes 2-arachidonoylglycerol (2-AG), thereby acting as a regulator of endocannabinoid signaling pathways. Has a strong preference for very-long-chain lipid substrates; substrate specificity is likely due to improved catalysis and not improved substrate binding. This is Lysophosphatidylserine lipase ABHD12 from Macaca fascicularis (Crab-eating macaque).